The sequence spans 335 residues: MWRLLATLSCLVLLTSARESLHFQPLSDELVNFINKQNTTWTAGHNFYNVDLSYVKKLCGTFLGGPKLPQRAAFAADMILPKSFDAREQWPNCPTIKEIRDQGSCGSCWAFGAVEAISDRICIRSNGRVNVEVSAEDMLTCCGDECGDGCNGGFPSGAWNFWTKKGLVSGGLYDSHVGCRPYSIPPCEHHVNGSRPPCTGEGDTPKCSKICEPGYTPSYKEDKHFGCSSYSISRNEKEIMAEIYKNGPVEGAFTVYSDFLQYKSGVYQHVTGDLMGGHAIRILGWGVENGTPYWLVGNSWNTDWGDNGFFKILRGQDHCGIESEIVAGIPCTPHF.

Residues 1-17 form the signal peptide; the sequence is MWRLLATLSCLVLLTSA. Residues 18–79 constitute a propeptide, activation peptide; sequence RESLHFQPLS…QRAAFAADMI (62 aa). 6 cysteine pairs are disulfide-bonded: Cys93-Cys122, Cys105-Cys150, Cys141-Cys207, Cys142-Cys146, Cys179-Cys211, and Cys187-Cys198. Cys108 is a catalytic residue. N-linked (GlcNAc...) asparagine glycosylation occurs at Asn192. N6-acetyllysine is present on Lys220. Cys227 and Cys331 are disulfide-bonded. Residues His278 and Asn298 contribute to the active site. The propeptide occupies 333–335; the sequence is PHF.

The protein belongs to the peptidase C1 family. As to quaternary structure, dimer of a heavy chain and a light chain cross-linked by a disulfide bond. Interacts with SRPX2. Directly interacts with SHKBP1. Expressed in heart (at protein level).

The protein localises to the lysosome. It localises to the melanosome. Its subcellular location is the secreted. The protein resides in the extracellular space. It is found in the apical cell membrane. The enzyme catalyses Hydrolysis of proteins with broad specificity for peptide bonds. Preferentially cleaves -Arg-Arg-|-Xaa bonds in small molecule substrates (thus differing from cathepsin L). In addition to being an endopeptidase, shows peptidyl-dipeptidase activity, liberating C-terminal dipeptides.. Functionally, thiol protease which is believed to participate in intracellular degradation and turnover of proteins. Cleaves matrix extracellular phosphoglycoprotein MEPE. Involved in the solubilization of cross-linked TG/thyroglobulin in the thyroid follicle lumen. Has also been implicated in tumor invasion and metastasis. The protein is Cathepsin B (CTSB) of Sus scrofa (Pig).